The primary structure comprises 704 residues: MALDVLTDLKKVRNIGIMAHIDAGKTTTTERILFYTGINHKLGETHDGASTMDWMAQEQERGITITSAATSCYWHDYQINIIDTPGHVDFTVEVERSLRVLDGAVAVFDGKEGVEPQSETVWRQADKYEVPRICFVNKMDKLGADFYFTVDTIKSRLGATPLVLQLPIGAENDFVGVVDLITMKALVWEGDSKGDVSLGAKYETREIPEDLQDRAAEYRNQLVEAVAEADDELMEKYLGGEELTEDEIKAGIRKLTITSQAYPVLCGSAFKNRGVQPMLDAVVDYLPSPLDVEDVQGHAINDEEEVMTRTADADGPFAALAFKVASHPFYGQLTYIRVYSGKAKAGEQVMNSTKGKRERIGKLFQMHSNKENPVEEISAGHIYAAIGLKDTTTGDTLSDPSNQIVLESMSFPAPVIFVAIEPKTKGDQEKLSTAIQKLSAEDPTFTVSLNDETGQTEIGGMGELHLDILVDRMKREFKVEANVGKPQVAYRETIKKAVEKVDYTHKKQTGGSGQFAKVQVSFEPLPLDAEELYEFDNAVTGGRVPREYIPSVDHGIQDAMQLGILAGYPVVGVKATLVDGAYHDVDSSEMAFKIAGSMVFKEGARRANPVLLEPLMAVEVRTPEEYMGDVIGDLNSRRGQIQSMEDVTGVKLVSALVPLSEMFGYIGDLRSKTQGRAVYSMQFDSYSEVPKAVAEEIIQKNRGE.

The region spanning 10–290 is the tr-type G domain; the sequence is KKVRNIGIMA…AVVDYLPSPL (281 aa). Residues 19–26, 83–87, and 137–140 contribute to the GTP site; these read AHIDAGKT, DTPGH, and NKMD.

Belongs to the TRAFAC class translation factor GTPase superfamily. Classic translation factor GTPase family. EF-G/EF-2 subfamily.

It localises to the cytoplasm. Catalyzes the GTP-dependent ribosomal translocation step during translation elongation. During this step, the ribosome changes from the pre-translocational (PRE) to the post-translocational (POST) state as the newly formed A-site-bound peptidyl-tRNA and P-site-bound deacylated tRNA move to the P and E sites, respectively. Catalyzes the coordinated movement of the two tRNA molecules, the mRNA and conformational changes in the ribosome. The chain is Elongation factor G from Kocuria rhizophila (strain ATCC 9341 / DSM 348 / NBRC 103217 / DC2201).